Reading from the N-terminus, the 285-residue chain is MWAQLSYTRPESQKTDLTSLFSTDQEQNPLNDYQYQINIRELEEYYNKTILNEDNIQETSSEISSAVSFSPPKNTNAIQPGLLYDPQLMNPFLPSAHLNSTAPTTFKKKLEVQINPDYVPKSSQLPLTSQNLQQLSQQKPKNDASFSSEKESSAQPKVKSQVQETPKQLYKTELCESFTLKGSCPYGSKCQFAHGLGELKVKKSCKNFRTKPCVNWEKLGYCPYGRRCCFKHGDDNDIAVYVKAGTYCNVSSTSKQSDEKRSNGRGSAKKKNLNVKVKALQRMTW.

Positions 37 to 55 (INIRELEEYYNKTILNEDN) are required for mRNA decay activity. Residues 132 to 164 (LQQLSQQKPKNDASFSSEKESSAQPKVKSQVQE) are disordered. Positions 153-164 (SAQPKVKSQVQE) are enriched in polar residues. 2 C3H1-type zinc fingers span residues 169-197 (LYKT…HGLG) and 207-235 (NFRT…HGDD). The segment at 252 to 271 (STSKQSDEKRSNGRGSAKKK) is disordered.

In terms of assembly, interacts with DHH1.

It is found in the nucleus. Its subcellular location is the cytoplasm. It localises to the P-body. In terms of biological role, binds to specific AU-rich elements (ARE) in the 3'-untranslated region of target mRNAs and promotes their degradation. In response to iron deficiency, promotes the decay of many mRNAs encoding proteins involved in iron-dependent pathways. Recruits the DHH1 helicase to the SDH4 mRNA and promotes SDH4 mRNA decay. Also destabilizes target mRNA by modulating 3'-end processing, creating extended transcripts that are prone for degradation. The chain is mRNA decay factor CTH2 (TIS11) from Saccharomyces cerevisiae (strain ATCC 204508 / S288c) (Baker's yeast).